The primary structure comprises 201 residues: 3-isopropylmalate dehydratase small subunit (201 aa).

Belongs to the LeuD family. LeuD type 1 subfamily. In terms of assembly, heterodimer of LeuC and LeuD.

It carries out the reaction (2R,3S)-3-isopropylmalate = (2S)-2-isopropylmalate. It functions in the pathway amino-acid biosynthesis; L-leucine biosynthesis; L-leucine from 3-methyl-2-oxobutanoate: step 2/4. Its function is as follows. Catalyzes the isomerization between 2-isopropylmalate and 3-isopropylmalate, via the formation of 2-isopropylmaleate. In Shewanella baltica (strain OS223), this protein is 3-isopropylmalate dehydratase small subunit.